A 669-amino-acid polypeptide reads, in one-letter code: Methionine--tRNA ligase (669 aa).

The 'HIGH' region signature appears at 14–24; the sequence is YYPSGKLHIGN. His-161 contacts Zn(2+). A 'KMSKS' region motif is present at residues 309-313; sequence KMSKS. Lys-312 contacts ATP. A tRNA-binding domain is found at 566–669; sequence DFDKVELKVA…KEMPNGAGIA (104 aa).

This sequence belongs to the class-I aminoacyl-tRNA synthetase family. MetG type 2B subfamily. Homodimer.

The protein localises to the cytoplasm. The catalysed reaction is tRNA(Met) + L-methionine + ATP = L-methionyl-tRNA(Met) + AMP + diphosphate. Its function is as follows. Is required not only for elongation of protein synthesis but also for the initiation of all mRNA translation through initiator tRNA(fMet) aminoacylation. The sequence is that of Methionine--tRNA ligase from Enterococcus faecalis (strain ATCC 700802 / V583).